A 435-amino-acid polypeptide reads, in one-letter code: ATP-dependent protease ATPase subunit HslU (435 aa).

ATP-binding positions include I18, 60–65, D248, E313, and R385; that span reads GVGKTE.

Belongs to the ClpX chaperone family. HslU subfamily. As to quaternary structure, a double ring-shaped homohexamer of HslV is capped on each side by a ring-shaped HslU homohexamer. The assembly of the HslU/HslV complex is dependent on binding of ATP.

The protein resides in the cytoplasm. Functionally, ATPase subunit of a proteasome-like degradation complex; this subunit has chaperone activity. The binding of ATP and its subsequent hydrolysis by HslU are essential for unfolding of protein substrates subsequently hydrolyzed by HslV. HslU recognizes the N-terminal part of its protein substrates and unfolds these before they are guided to HslV for hydrolysis. This chain is ATP-dependent protease ATPase subunit HslU, found in Agrobacterium fabrum (strain C58 / ATCC 33970) (Agrobacterium tumefaciens (strain C58)).